Consider the following 475-residue polypeptide: MEIOTIC F-BOX protein MOF (475 aa).

The tract at residues 1 to 58 (MRRERDATQIPENPMEGIPQTAAAAAAAAAAEASEPPRKRARVDGGGGGAGEEEEDRL) is disordered. Residues 22 to 33 (AAAAAAAAAAEA) are compositionally biased toward low complexity. The 37-residue stretch at 55–91 (EDRLSDLPDCLLEDILAHLGSRQAVQTSVLSRRWRNL) folds into the F-box domain.

The protein belongs to the F-box protein family. FBX subfamily. Part of a SCF (SKP1-CUL1-F-box protein) E3 ubiquitin-protein ligase complex. Interacts (via F-box domain) directly with SKP1. In terms of tissue distribution, highly expressed in the stem, leaf and in the anther during meiosis. Weakly expressed in roots and lemma/palea.

The protein resides in the nucleus. Its subcellular location is the chromosome. It participates in protein modification; protein ubiquitination. In terms of biological role, probable component of a SCF (SKP1-CULLIN-F-box protein) E3 ubiquitin-protein ligase complex and may function through the ubiquitin-mediated protein degradation or signaling pathway. Required for male meiotic prophase I progression. Required for telomere bouquet formation, homologous chromosome pairing and for the formation of the synaptonemal complex (SC), which stabilizes initial chromosomal axial associations and promotes crossover formation. Involved in meiotic DNA double-strand break (DSB) end-processing and repair, and is important in the recruitment of DSB repair proteins to the DSB sites. The polypeptide is MEIOTIC F-BOX protein MOF (Oryza sativa subsp. japonica (Rice)).